The primary structure comprises 405 residues: L-rhamnonate dehydratase (405 aa).

Substrate contacts are provided by His33 and Arg59. The Mg(2+) site is built by Asp226, Glu252, and Glu280. The Proton acceptor role is filled by His329. Glu349 is a substrate binding site.

Belongs to the mandelate racemase/muconate lactonizing enzyme family. RhamD subfamily. As to quaternary structure, homooctamer; tetramer of dimers. The cofactor is Mg(2+).

It catalyses the reaction L-rhamnonate = 2-dehydro-3-deoxy-L-rhamnonate + H2O. Its function is as follows. Catalyzes the dehydration of L-rhamnonate to 2-keto-3-deoxy-L-rhamnonate (KDR). The chain is L-rhamnonate dehydratase from Salmonella paratyphi A (strain AKU_12601).